An 83-amino-acid polypeptide reads, in one-letter code: Protein L83L (83 aa).

Belongs to the asfivirus L83L family. As to quaternary structure, interacts with host IL1B.

It localises to the host cytoplasm. Functionally, may subvert the host innate immune response by interacting with host IL1B and interfering with its function. This is Protein L83L from Ornithodoros (relapsing fever ticks).